The chain runs to 75 residues: MFTGLPALSYEQQQQAVERIQQLMAEGMSSGQAIGMVAAEIRENHTGGHVAVMFDEDEEDYMGDNNHDEEEPEEE.

Belongs to the UPF0181 family.

This chain is UPF0181 protein ETA_15280, found in Erwinia tasmaniensis (strain DSM 17950 / CFBP 7177 / CIP 109463 / NCPPB 4357 / Et1/99).